A 153-amino-acid chain; its full sequence is Ribosome maturation factor RimP (153 aa).

It belongs to the RimP family.

The protein resides in the cytoplasm. Required for maturation of 30S ribosomal subunits. This chain is Ribosome maturation factor RimP, found in Nostoc sp. (strain PCC 7120 / SAG 25.82 / UTEX 2576).